Reading from the N-terminus, the 226-residue chain is Cytidylate kinase (226 aa).

12–20 (GPSGAGKGT) is a binding site for ATP.

It belongs to the cytidylate kinase family. Type 1 subfamily.

It is found in the cytoplasm. The enzyme catalyses CMP + ATP = CDP + ADP. It carries out the reaction dCMP + ATP = dCDP + ADP. In Colwellia psychrerythraea (strain 34H / ATCC BAA-681) (Vibrio psychroerythus), this protein is Cytidylate kinase.